The sequence spans 344 residues: Tripartite motif-containing protein 44 (344 aa).

Positions Pro69–Pro165 are disordered. The segment covering Glu88 to Pro165 has biased composition (acidic residues). The segment at Val174 to Leu215 adopts a B box-type zinc-finger fold. 4 residues coordinate Zn(2+): Cys179, His182, Cys201, and His207. Residues Ala290 to Glu325 are a coiled coil. The disordered stretch occupies residues Gln309–Thr344. The span at Gly330 to Thr344 shows a compositional bias: acidic residues. Residues Ser336 and Ser339 each carry the phosphoserine modification.

As to quaternary structure, interacts (via coiled coil) with TRIM17 (via coiled coil).

May play a role in the process of differentiation and maturation of neuronal cells. May regulate the activity of TRIM17. Is a negative regulator of PAX6 expression. This chain is Tripartite motif-containing protein 44 (Trim44), found in Rattus norvegicus (Rat).